The sequence spans 537 residues: Cytochrome P450 monooxygenase ltmQ (537 aa).

A helical membrane pass occupies residues 10–30 (FPKLNFATIVISGATIIGIIF). Residues asparagine 182, asparagine 188, and asparagine 310 are each glycosylated (N-linked (GlcNAc...) asparagine). Position 476 (cysteine 476) interacts with heme.

This sequence belongs to the cytochrome P450 family. It depends on heme as a cofactor.

The protein localises to the membrane. It functions in the pathway secondary metabolite biosynthesis. Its function is as follows. Cytochrome P450 monooxygenase; part of the gene clusters that mediates the biosynthesis of lolitrems, indole-diterpene mycotoxins that are potent tremorgens in mammals, and are synthesized by clavicipitaceous fungal endophytes in association with their grass hosts. The geranylgeranyl diphosphate (GGPP) synthase ltmG is proposed to catalyze the first step in lolitrem biosynthesis. LtmG catalyzes a series of iterative condensations of isopentenyl diphosphate (IPP) with dimethylallyl diphosphate (DMAPP), geranyl diphosphate (GPP), and farnesyl diphosphate (FPP), to form GGPP. GGPP then condenses with indole-3-glycerol phosphate to form 3-geranylgeranylindole, an acyclic intermediate, to be incorporated into paxilline. Either ltmG or ltmC could be responsible for this step, as both are putative prenyl transferases. The FAD-dependent monooxygenase ltmM then catalyzes the epoxidation of the two terminal alkenes of the geranylgeranyl moiety, which is subsequently cyclized by ltmB, to paspaline. The cytochrome P450 monooxygenases ltmQ and ltmP can sequentially oxidize paspaline to terpendole E and terpendole F. Alternatively, ltmP converts paspaline to an intermediate which is oxidized by ltmQ to terpendole F. LtmF, ltmK, ltmE and ltmJ appear to be unique to the epichloe endophytes. The prenyltransferase ltmF is involved in the 27-hydroxyl-O-prenylation. The cytochrome P450 monooxygenase ltmK is required for the oxidative acetal ring formation. The multi-functional prenyltransferase ltmE is required for C20- and C21-prenylations of the indole ring of paspalanes and acts together with the cytochrome P450 monooxygenase ltmJ to yield lolitremanes by multiple oxidations and ring closures. The stereoisomer pairs of lolitriol and lolitrem N or lolitrem B and lolitrem F may be attributed to variations in the way in which ring closure can occur under the action of ltmJ. While the major product of this pathway is lolitrem B, the prenyl transferases and cytochrome P450 monooxygenases identified in this pathway have a remarkable versatility in their regio- and stereo-specificities to generate a diverse range of metabolites that are products of a metabolic grid rather than a linear pathway. The chain is Cytochrome P450 monooxygenase ltmQ from Epichloe festucae var. lolii (Neotyphodium lolii).